Reading from the N-terminus, the 122-residue chain is Large ribosomal subunit protein uL22 (122 aa).

The protein belongs to the universal ribosomal protein uL22 family. Part of the 50S ribosomal subunit.

In terms of biological role, this protein binds specifically to 23S rRNA; its binding is stimulated by other ribosomal proteins, e.g. L4, L17, and L20. It is important during the early stages of 50S assembly. It makes multiple contacts with different domains of the 23S rRNA in the assembled 50S subunit and ribosome. Functionally, the globular domain of the protein is located near the polypeptide exit tunnel on the outside of the subunit, while an extended beta-hairpin is found that lines the wall of the exit tunnel in the center of the 70S ribosome. In Thermosynechococcus vestitus (strain NIES-2133 / IAM M-273 / BP-1), this protein is Large ribosomal subunit protein uL22.